Reading from the N-terminus, the 122-residue chain is Large ribosomal subunit protein uL14 (122 aa).

The protein belongs to the universal ribosomal protein uL14 family. In terms of assembly, part of the 50S ribosomal subunit. Forms a cluster with proteins L3 and L19. In the 70S ribosome, L14 and L19 interact and together make contacts with the 16S rRNA in bridges B5 and B8.

Functionally, binds to 23S rRNA. Forms part of two intersubunit bridges in the 70S ribosome. This Jannaschia sp. (strain CCS1) protein is Large ribosomal subunit protein uL14.